The sequence spans 127 residues: Large ribosomal subunit protein bL12 (127 aa).

The protein belongs to the bacterial ribosomal protein bL12 family. As to quaternary structure, homodimer. Part of the ribosomal stalk of the 50S ribosomal subunit. Forms a multimeric L10(L12)X complex, where L10 forms an elongated spine to which 2 to 4 L12 dimers bind in a sequential fashion. Binds GTP-bound translation factors.

Functionally, forms part of the ribosomal stalk which helps the ribosome interact with GTP-bound translation factors. Is thus essential for accurate translation. This Nitratiruptor sp. (strain SB155-2) protein is Large ribosomal subunit protein bL12.